Here is a 254-residue protein sequence, read N- to C-terminus: (2Z,6E)-farnesyl diphosphate synthase (254 aa).

Asp34 is an active-site residue. Asp34 is a binding site for Mg(2+). Residues 35-38 (GNRR), Trp39, His52, and 80-82 (STD) contribute to the substrate site. Asn83 acts as the Proton acceptor in catalysis. Substrate contacts are provided by residues Arg86, Arg203, and 209–211 (RLS). Glu222 is a binding site for Mg(2+).

Belongs to the UPP synthase family. Z-FPP synthase subfamily. As to quaternary structure, homodimer. Requires Mg(2+) as cofactor.

The catalysed reaction is isopentenyl diphosphate + (2E)-geranyl diphosphate = (2Z,6E)-farnesyl diphosphate + diphosphate. In terms of biological role, catalyzes the condensation of only one isopentenyl pyrophosphate (IPP) unit in the cis configuration to E-geranyl diphosphate (E-GPP) generating the 15 carbon product (2Z,6E)-farnesyl diphosphate (Z-FPP or EZ-FPP). Only geranyl diphosphate (GPP) can be used as isoprenyl acceptor. The polypeptide is (2Z,6E)-farnesyl diphosphate synthase (Thermobifida fusca (strain YX)).